A 342-amino-acid polypeptide reads, in one-letter code: Ferredoxin--NADP reductase (342 aa).

C17, D36, Q44, Y49, V89, F124, D289, and T330 together coordinate FAD.

It belongs to the ferredoxin--NADP reductase type 2 family. As to quaternary structure, homodimer. Requires FAD as cofactor.

It carries out the reaction 2 reduced [2Fe-2S]-[ferredoxin] + NADP(+) + H(+) = 2 oxidized [2Fe-2S]-[ferredoxin] + NADPH. This Nitrobacter winogradskyi (strain ATCC 25391 / DSM 10237 / CIP 104748 / NCIMB 11846 / Nb-255) protein is Ferredoxin--NADP reductase.